A 291-amino-acid chain; its full sequence is Probable cell wall amidase LytH (291 aa).

A signal peptide spans 1–40; the sequence is MKKIDSWLTKHGLKNRLTLVVIVIFIIFLILLFMFVNLSD. In terms of domain architecture, SH3b spans 41–105; it reads EDTGQITITE…WVAGWHTNLN (65 aa). Residues 122 to 286 enclose the MurNAc-LAA domain; sequence IVLDPGHGGS…VEQAIVDGLK (165 aa). The disordered stretch occupies residues 123-147; sequence VLDPGHGGSDQGASSSTPSKSLEKN. Positions 133–142 are enriched in polar residues; the sequence is QGASSSTPSK.

The protein belongs to the N-acetylmuramoyl-L-alanine amidase 3 family.

It is found in the secreted. In terms of biological role, probably involved in cell-wall metabolism. The protein is Probable cell wall amidase LytH (lytH) of Staphylococcus epidermidis (strain ATCC 35984 / DSM 28319 / BCRC 17069 / CCUG 31568 / BM 3577 / RP62A).